Consider the following 73-residue polypeptide: Putative membrane protein insertion efficiency factor (73 aa).

It belongs to the UPF0161 family.

The protein localises to the cell inner membrane. In terms of biological role, could be involved in insertion of integral membrane proteins into the membrane. The protein is Putative membrane protein insertion efficiency factor of Jannaschia sp. (strain CCS1).